Here is a 181-residue protein sequence, read N- to C-terminus: Peptide deformylase (181 aa).

Fe cation is bound by residues Cys104 and His146. Glu147 is a catalytic residue. His150 contributes to the Fe cation binding site.

The protein belongs to the polypeptide deformylase family. It depends on Fe(2+) as a cofactor.

The catalysed reaction is N-terminal N-formyl-L-methionyl-[peptide] + H2O = N-terminal L-methionyl-[peptide] + formate. In terms of biological role, removes the formyl group from the N-terminal Met of newly synthesized proteins. Requires at least a dipeptide for an efficient rate of reaction. N-terminal L-methionine is a prerequisite for activity but the enzyme has broad specificity at other positions. This Helicobacter hepaticus (strain ATCC 51449 / 3B1) protein is Peptide deformylase.